The primary structure comprises 243 residues: GTP cyclohydrolase 1 (243 aa).

Position 15 is a phosphothreonine (Thr-15). A disordered region spans residues 18–55 (NIRPTSPYTLNPPVERDGFSWPSVGTRQRAEETEEEEK). Phosphoserine is present on Ser-23. The Zn(2+) site is built by Cys-132, His-135, and Cys-203.

This sequence belongs to the GTP cyclohydrolase I family. As to quaternary structure, homodimer.

The catalysed reaction is GTP + H2O = 7,8-dihydroneopterin 3'-triphosphate + formate + H(+). It functions in the pathway cofactor biosynthesis; 7,8-dihydroneopterin triphosphate biosynthesis; 7,8-dihydroneopterin triphosphate from GTP: step 1/1. Functionally, GTP cyclohydrolase 1 is the first enzyme in the biosynthetic pathway leading to folic acid. In Saccharomyces cerevisiae (strain ATCC 204508 / S288c) (Baker's yeast), this protein is GTP cyclohydrolase 1.